Reading from the N-terminus, the 102-residue chain is Small ribosomal subunit protein uS10 (102 aa).

It belongs to the universal ribosomal protein uS10 family. Part of the 30S ribosomal subunit.

Functionally, involved in the binding of tRNA to the ribosomes. The protein is Small ribosomal subunit protein uS10 of Mesoplasma florum (strain ATCC 33453 / NBRC 100688 / NCTC 11704 / L1) (Acholeplasma florum).